We begin with the raw amino-acid sequence, 668 residues long: DNA mismatch repair protein MutL (668 aa).

Positions 437–459 (TYQSQYSETGSHSQETLPLSEQK) are disordered. Residues 438–459 (YQSQYSETGSHSQETLPLSEQK) show a composition bias toward polar residues.

Belongs to the DNA mismatch repair MutL/HexB family.

In terms of biological role, this protein is involved in the repair of mismatches in DNA. It is required for dam-dependent methyl-directed DNA mismatch repair. May act as a 'molecular matchmaker', a protein that promotes the formation of a stable complex between two or more DNA-binding proteins in an ATP-dependent manner without itself being part of a final effector complex. This chain is DNA mismatch repair protein MutL, found in Leuconostoc citreum (strain KM20).